Here is a 201-residue protein sequence, read N- to C-terminus: MQSVSIEAIKRDTGKNAARRLKNQGYIPAILYGKGMAESIPLAVEYNKLQRLLQKHGRNVLLNVIVDGSTHNAVIKEIQEDTLKGKIIHVDFQRVSMYEEIEATVPLKFEGTGLIESRGGIVQHQLWELTVESLPDKIPQEIVVDLSNLEIGDTLFVKDIQVPEGVKVVDDPDEIVVSVLAPRESEEEAEEEATETAKESE.

The interval 181-201 is disordered; that stretch reads APRESEEEAEEEATETAKESE. The span at 185–194 shows a compositional bias: acidic residues; that stretch reads SEEEAEEEAT.

It belongs to the bacterial ribosomal protein bL25 family. CTC subfamily. Part of the 50S ribosomal subunit; part of the 5S rRNA/L5/L18/L25 subcomplex. Contacts the 5S rRNA. Binds to the 5S rRNA independently of L5 and L18.

This is one of the proteins that binds to the 5S RNA in the ribosome where it forms part of the central protuberance. The chain is Large ribosomal subunit protein bL25 from Thermoanaerobacter pseudethanolicus (strain ATCC 33223 / 39E) (Clostridium thermohydrosulfuricum).